We begin with the raw amino-acid sequence, 85 residues long: Large ribosomal subunit protein bL27 (85 aa).

Belongs to the bacterial ribosomal protein bL27 family.

The sequence is that of Large ribosomal subunit protein bL27 from Campylobacter hominis (strain ATCC BAA-381 / DSM 21671 / CCUG 45161 / LMG 19568 / NCTC 13146 / CH001A).